Reading from the N-terminus, the 231-residue chain is MSRAALDKDPRDVASMFDGVARRYDLTNTVLSLGQDRYWRRATRSALRIGPGDKVLDLAAGTAVSTVELAKSGAWCVAADFSVGMLAAGHERKVCKVAGDATRLPFADDVFDAVTISFGLRNVVDFSAALREMARVTRPGGRLVVCEFSTPVSALFATVYKEYLMRALPRVARAVSSNPEAYVYLAESIRAWPDQAALAQQMSRAGWSAVRWRNLTGGIVALHAGYKPQPV.

Residues Thr-62, Asp-80, 100 to 101, and Ser-117 contribute to the S-adenosyl-L-methionine site; that span reads DA.

This sequence belongs to the class I-like SAM-binding methyltransferase superfamily. MenG/UbiE family.

The catalysed reaction is a 2-demethylmenaquinol + S-adenosyl-L-methionine = a menaquinol + S-adenosyl-L-homocysteine + H(+). It functions in the pathway quinol/quinone metabolism; menaquinone biosynthesis; menaquinol from 1,4-dihydroxy-2-naphthoate: step 2/2. Methyltransferase required for the conversion of demethylmenaquinol (DMKH2) to menaquinol (MKH2). The protein is Demethylmenaquinone methyltransferase of Mycobacterium marinum (strain ATCC BAA-535 / M).